The primary structure comprises 413 residues: MEVQEFCENMEEIEDENYDEEKSARTSDENRKQNHSEIEKRRRDKMNTYINELSSMIPMCFAMQRKLDKLTVLRMAVQHLRGIRGSGSLHPFNGSDYRPSFLSDQELKMIILQASEGFLFVVGCDRGRILYVSDSVSSVLNSTQADLLGQSWFDVLHPKDIGKVKEQLSSLEQCPRERLIDAKTMLPVKTDVPQSLCRLCPGARRSFFCRMKLRTASNNQIKEESDTSSSSRSSTKRKSRLTTGHKYRVIQCTGYLKSWTPIKDEDQDADSDEQTTNLSCLVAIGRIPPNVRNSTVPASLDNHPNIRHVLFISRHSGEGKFLFIDQRATLVIGFLPQEILGTSFYEYFHNEDIAALMESHKMVMQVPEKVTTQVYRFRCKDNSYIQLQSEWRAFKNPWTSEIDYIIAKNSVFL.

The segment at 1-43 (MEVQEFCENMEEIEDENYDEEKSARTSDENRKQNHSEIEKRRR) is disordered. Positions 8–19 (ENMEEIEDENYD) are enriched in acidic residues. A compositionally biased stretch (basic and acidic residues) spans 20–41 (EEKSARTSDENRKQNHSEIEKR). Residues 30–83 (NRKQNHSEIEKRRRDKMNTYINELSSMIPMCFAMQRKLDKLTVLRMAVQHLRGI) form the bHLH domain. The PAS 1 domain maps to 104–175 (DQELKMIILQ…EQLSSLEQCP (72 aa)). The disordered stretch occupies residues 219-242 (NQIKEESDTSSSSRSSTKRKSRLT). The region spanning 297 to 367 (PASLDNHPNI…ESHKMVMQVP (71 aa)) is the PAS 2 domain. One can recognise a PAC domain in the interval 372–413 (TQVYRFRCKDNSYIQLQSEWRAFKNPWTSEIDYIIAKNSVFL).

Efficient DNA binding requires dimerization with another bHLH protein. Forms a heterodimer with Clock in order to activate PER and TIM transcription. In terms of tissue distribution, expressed in head and ovary.

It is found in the nucleus. Functionally, putative transcription factor involved in the generation of biological rhythms. Activates cycling transcription of Period (PER) and Timeless (TIM) by binding to the E-box (5'-CACGTG-3') present in their promoters. This chain is Protein cycle (cyc), found in Drosophila melanogaster (Fruit fly).